Consider the following 594-residue polypeptide: Alanine--tRNA ligase (594 aa).

Zn(2+)-binding residues include H456, H460, C558, and H562.

It belongs to the class-II aminoacyl-tRNA synthetase family. Requires Zn(2+) as cofactor.

The protein localises to the cytoplasm. The enzyme catalyses tRNA(Ala) + L-alanine + ATP = L-alanyl-tRNA(Ala) + AMP + diphosphate. Functionally, catalyzes the attachment of alanine to tRNA(Ala) in a two-step reaction: alanine is first activated by ATP to form Ala-AMP and then transferred to the acceptor end of tRNA(Ala). Also edits incorrectly charged Ser-tRNA(Ala) and Gly-tRNA(Ala) via its editing domain. This chain is Alanine--tRNA ligase (alaS), found in Borreliella afzelii (strain PKo) (Borrelia afzelii).